We begin with the raw amino-acid sequence, 425 residues long: Gamma-glutamyl phosphate reductase (425 aa).

This sequence belongs to the gamma-glutamyl phosphate reductase family.

It is found in the cytoplasm. It catalyses the reaction L-glutamate 5-semialdehyde + phosphate + NADP(+) = L-glutamyl 5-phosphate + NADPH + H(+). Its pathway is amino-acid biosynthesis; L-proline biosynthesis; L-glutamate 5-semialdehyde from L-glutamate: step 2/2. Catalyzes the NADPH-dependent reduction of L-glutamate 5-phosphate into L-glutamate 5-semialdehyde and phosphate. The product spontaneously undergoes cyclization to form 1-pyrroline-5-carboxylate. The polypeptide is Gamma-glutamyl phosphate reductase (Xylella fastidiosa (strain M23)).